A 59-amino-acid chain; its full sequence is UPF0434 protein HEAR2489 (59 aa).

This sequence belongs to the UPF0434 family.

This Herminiimonas arsenicoxydans protein is UPF0434 protein HEAR2489.